The sequence spans 156 residues: Ribosomal RNA large subunit methyltransferase H (156 aa).

S-adenosyl-L-methionine is bound by residues Leu73, Gly104, and 123 to 128 (LSALTL).

This sequence belongs to the RNA methyltransferase RlmH family. In terms of assembly, homodimer.

The protein resides in the cytoplasm. The enzyme catalyses pseudouridine(1915) in 23S rRNA + S-adenosyl-L-methionine = N(3)-methylpseudouridine(1915) in 23S rRNA + S-adenosyl-L-homocysteine + H(+). In terms of biological role, specifically methylates the pseudouridine at position 1915 (m3Psi1915) in 23S rRNA. This is Ribosomal RNA large subunit methyltransferase H from Vibrio parahaemolyticus serotype O3:K6 (strain RIMD 2210633).